The chain runs to 597 residues: Aspartate--tRNA ligase (597 aa).

Glutamate 180 is an L-aspartate binding site. The tract at residues 204 to 207 (QLFK) is aspartate. Arginine 226 lines the L-aspartate pocket. ATP is bound by residues 226 to 228 (RDE) and glutamine 235. Histidine 454 contacts L-aspartate. Glutamate 488 is a binding site for ATP. Arginine 495 contributes to the L-aspartate binding site. ATP is bound at residue 540–543 (GLDR).

It belongs to the class-II aminoacyl-tRNA synthetase family. Type 1 subfamily. Homodimer.

It is found in the cytoplasm. It catalyses the reaction tRNA(Asp) + L-aspartate + ATP = L-aspartyl-tRNA(Asp) + AMP + diphosphate. Functionally, catalyzes the attachment of L-aspartate to tRNA(Asp) in a two-step reaction: L-aspartate is first activated by ATP to form Asp-AMP and then transferred to the acceptor end of tRNA(Asp). The polypeptide is Aspartate--tRNA ligase (Clostridium perfringens (strain ATCC 13124 / DSM 756 / JCM 1290 / NCIMB 6125 / NCTC 8237 / Type A)).